Consider the following 487-residue polypeptide: Cytochrome P450 720B2 (487 aa).

Residues 14–34 (WLVGLLCLVLGFLLLQLYKLV) form a helical membrane-spanning segment. Cysteine 436 is a heme binding site.

Belongs to the cytochrome P450 family. Heme serves as cofactor.

It localises to the membrane. The polypeptide is Cytochrome P450 720B2 (CYP720B2) (Pinus taeda (Loblolly pine)).